A 155-amino-acid polypeptide reads, in one-letter code: DNA-directed RNA polymerases I, II, and III subunit RPABC2 (155 aa).

The segment covering 1-19 (MSDYEEAFNDGNENFEDFD) has biased composition (acidic residues). The disordered stretch occupies residues 1-57 (MSDYEEAFNDGNENFEDFDVEHFSDEETYEEKPQFKDGETTDANGKTIVTGGNGPED). The segment covering 20 to 39 (VEHFSDEETYEEKPQFKDGE) has biased composition (basic and acidic residues). Ser24 bears the Phosphoserine mark. The segment at 111-132 (LEGETDPLRIAMKELAEKKIPL) is leucine-zipper.

It belongs to the archaeal Rpo6/eukaryotic RPB6 RNA polymerase subunit family. In terms of assembly, component of the RNA polymerase I (Pol I), RNA polymerase II (Pol II) and RNA polymerase III (Pol III) complexes. Component of the RNA polymerase I (Pol I) complex consisting of 14 subunits: RPA135, RPA190, RPC40, RPA14, RPB5, RPO26, RPA43, RPB8, RPA12, RPB10, RPC19, RPC10, RPA49 and RPA34. The complex is composed of a horseshoe-shaped core containing ten subunits (RPA135, RPA190, RPB5, RPO26, RPB8, RPB10, RPC10, RPA12, RPC19 and RPC40) where RPA135 and RPA190 form the DNA-binding cleft. Outside of the core, RPA14 and RPA43 form the stalk that mediates interactions with transcription initiation factors and newly synthesized RNA. Component of the RNA polymerase II (Pol II) complex consisting of 12 subunits: RPO21, RPB2, RPB3, RPB4, RPB5, RPO26, RPB7, RPB8, RPB9, RPB10 and RPC10. Component of the RNA polymerase III (Pol III) complex consisting of 17 subunits.

The protein localises to the cytoplasm. It localises to the nucleus. Its function is as follows. DNA-dependent RNA polymerases catalyze the transcription of DNA into RNA using the four ribonucleoside triphosphates as substrates. Common component of RNA polymerases I, II and III which synthesize ribosomal RNA precursors, mRNA precursors and many functional non-coding RNAs, and small RNAs, such as 5S rRNA and tRNAs, respectively. Pol II is the central component of the basal RNA polymerase II transcription machinery. RNA polymerases are composed of mobile elements that move relative to each other. In Pol II, RPB6 is part of the clamp element and together with parts of RPB1 and RPB2 forms a pocket to which the RPB4-RPB7 subcomplex binds. The polypeptide is DNA-directed RNA polymerases I, II, and III subunit RPABC2 (RPO26) (Saccharomyces cerevisiae (strain ATCC 204508 / S288c) (Baker's yeast)).